We begin with the raw amino-acid sequence, 363 residues long: Anhydro-N-acetylmuramic acid kinase (363 aa).

9 to 16 (GTSLDGID) serves as a coordination point for ATP.

Belongs to the anhydro-N-acetylmuramic acid kinase family.

It carries out the reaction 1,6-anhydro-N-acetyl-beta-muramate + ATP + H2O = N-acetyl-D-muramate 6-phosphate + ADP + H(+). Its pathway is amino-sugar metabolism; 1,6-anhydro-N-acetylmuramate degradation. It functions in the pathway cell wall biogenesis; peptidoglycan recycling. In terms of biological role, catalyzes the specific phosphorylation of 1,6-anhydro-N-acetylmuramic acid (anhMurNAc) with the simultaneous cleavage of the 1,6-anhydro ring, generating MurNAc-6-P. Is required for the utilization of anhMurNAc either imported from the medium or derived from its own cell wall murein, and thus plays a role in cell wall recycling. The protein is Anhydro-N-acetylmuramic acid kinase of Nitrosomonas europaea (strain ATCC 19718 / CIP 103999 / KCTC 2705 / NBRC 14298).